The chain runs to 293 residues: Ribosomal protein L11 methyltransferase (293 aa).

4 residues coordinate S-adenosyl-L-methionine: T145, G166, D188, and N230.

The protein belongs to the methyltransferase superfamily. PrmA family.

It localises to the cytoplasm. The catalysed reaction is L-lysyl-[protein] + 3 S-adenosyl-L-methionine = N(6),N(6),N(6)-trimethyl-L-lysyl-[protein] + 3 S-adenosyl-L-homocysteine + 3 H(+). In terms of biological role, methylates ribosomal protein L11. This Citrobacter koseri (strain ATCC BAA-895 / CDC 4225-83 / SGSC4696) protein is Ribosomal protein L11 methyltransferase.